Consider the following 89-residue polypeptide: Small ribosomal subunit protein uS17A (89 aa).

It belongs to the universal ribosomal protein uS17 family. As to quaternary structure, part of the 30S ribosomal subunit.

One of the primary rRNA binding proteins, it binds specifically to the 5'-end of 16S ribosomal RNA. This Bacteroides thetaiotaomicron (strain ATCC 29148 / DSM 2079 / JCM 5827 / CCUG 10774 / NCTC 10582 / VPI-5482 / E50) protein is Small ribosomal subunit protein uS17A.